The primary structure comprises 550 residues: Chaperonin GroEL 1 (550 aa).

Residues Thr29–Pro32, Asp86–Thr90, Gly413, Asn477–Ala479, and Asp493 contribute to the ATP site. Residues Ala524 to Phe550 form a disordered region. Residues Ser533–Ser543 show a composition bias toward basic residues.

This sequence belongs to the chaperonin (HSP60) family. Forms a cylinder of 14 subunits composed of two heptameric rings stacked back-to-back. Interacts with the co-chaperonin GroES.

The protein localises to the cytoplasm. The enzyme catalyses ATP + H2O + a folded polypeptide = ADP + phosphate + an unfolded polypeptide.. In terms of biological role, together with its co-chaperonin GroES, plays an essential role in assisting protein folding. The GroEL-GroES system forms a nano-cage that allows encapsulation of the non-native substrate proteins and provides a physical environment optimized to promote and accelerate protein folding. The sequence is that of Chaperonin GroEL 1 from Frankia alni (strain DSM 45986 / CECT 9034 / ACN14a).